A 104-amino-acid polypeptide reads, in one-letter code: Phosphoribosyl-ATP pyrophosphatase (104 aa).

It belongs to the PRA-PH family.

Its subcellular location is the cytoplasm. The catalysed reaction is 1-(5-phospho-beta-D-ribosyl)-ATP + H2O = 1-(5-phospho-beta-D-ribosyl)-5'-AMP + diphosphate + H(+). It functions in the pathway amino-acid biosynthesis; L-histidine biosynthesis; L-histidine from 5-phospho-alpha-D-ribose 1-diphosphate: step 2/9. This chain is Phosphoribosyl-ATP pyrophosphatase, found in Allorhizobium ampelinum (strain ATCC BAA-846 / DSM 112012 / S4) (Agrobacterium vitis (strain S4)).